Consider the following 605-residue polypeptide: Aspartate--tRNA(Asp/Asn) ligase (605 aa).

E183 serves as a coordination point for L-aspartate. Residues 207–210 (QLYK) are aspartate. R229 is an L-aspartate binding site. ATP is bound by residues 229 to 231 (RDE) and Q238. H456 provides a ligand contact to L-aspartate. Position 490 (E490) interacts with ATP. R497 lines the L-aspartate pocket. 542 to 545 (GLDR) contacts ATP.

It belongs to the class-II aminoacyl-tRNA synthetase family. Type 1 subfamily. In terms of assembly, homodimer.

The protein resides in the cytoplasm. The catalysed reaction is tRNA(Asx) + L-aspartate + ATP = L-aspartyl-tRNA(Asx) + AMP + diphosphate. Aspartyl-tRNA synthetase with relaxed tRNA specificity since it is able to aspartylate not only its cognate tRNA(Asp) but also tRNA(Asn). Reaction proceeds in two steps: L-aspartate is first activated by ATP to form Asp-AMP and then transferred to the acceptor end of tRNA(Asp/Asn). The protein is Aspartate--tRNA(Asp/Asn) ligase of Heliobacterium modesticaldum (strain ATCC 51547 / Ice1).